We begin with the raw amino-acid sequence, 206 residues long: Large ribosomal subunit protein uL4 (206 aa).

The interval 47–76 (GTQSAKTRAEVSGGGIKPWRQKGTGRARQG) is disordered.

The protein belongs to the universal ribosomal protein uL4 family. Part of the 50S ribosomal subunit.

One of the primary rRNA binding proteins, this protein initially binds near the 5'-end of the 23S rRNA. It is important during the early stages of 50S assembly. It makes multiple contacts with different domains of the 23S rRNA in the assembled 50S subunit and ribosome. Functionally, forms part of the polypeptide exit tunnel. The sequence is that of Large ribosomal subunit protein uL4 from Clostridium botulinum (strain Okra / Type B1).